The chain runs to 341 residues: Protein pelota homolog (341 aa).

Belongs to the eukaryotic release factor 1 family. Pelota subfamily. As to quaternary structure, monomer. It depends on a divalent metal cation as a cofactor.

It localises to the cytoplasm. Its function is as follows. May function in recognizing stalled ribosomes, interact with stem-loop structures in stalled mRNA molecules, and effect endonucleolytic cleavage of the mRNA. May play a role in the release non-functional ribosomes and degradation of damaged mRNAs. Has endoribonuclease activity. The protein is Protein pelota homolog of Methanoculleus marisnigri (strain ATCC 35101 / DSM 1498 / JR1).